A 418-amino-acid chain; its full sequence is Ras association domain-containing protein 5 (418 aa).

The interval 1–118 (MAMASPAIGQ…QPQDPRVPAE (118 aa)) is disordered. Ala-2 bears the N-acetylthreonine mark. Positions 77 to 89 (SRPARPLRPGLQQ) are enriched in low complexity. The Phorbol-ester/DAG-type zinc finger occupies 122–170 (GHCFAELVLPGGPGWCDLCGREVLRQALRCTNCKFTCHPECRSLIQLDC). Phosphoserine is present on residues Ser-182 and Ser-279. The Ras-associating domain maps to 274–364 (TDKRTSFYLP…LSFVLKENET (91 aa)). Residue Thr-352 is modified to Phosphothreonine. An SARAH domain is found at 366-413 (EVEWDAFSIPELQNFLTILEKEEQDKIQQVQKKYDKFRQKLEEALRES).

As to quaternary structure, interacts directly with activated HRAS; a RASSF5-STK4/MST1 complex probably associates with activated HRAS. Interacts with KRAS. Probably interacts with Ras-like GTPases RRAS, MRAS, RAP1B, RAP2A and RALA. Interacts with RRAS2. Can self-associate. Interacts with RSSF1 isoform A. The RSSF1 isoform A-RSSF5 heterodimer probably mediates the association of RSSF1 with HRAS. Isoform 2 interacts with activated RAP1A and ITGAL/LFA-1. Binds STK4/MST1, inhibiting STK4/MST1 autoactivation. As to expression, widely expressed. Frequently down-regulated in lung tumor cell lines and primary lung tumors.

The protein resides in the cytoplasm. Its subcellular location is the cytoskeleton. In terms of biological role, potential tumor suppressor. Seems to be involved in lymphocyte adhesion by linking RAP1A activation upon T-cell receptor or chemokine stimulation to integrin activation. Isoform 2 stimulates lymphocyte polarization and the patch-like distribution of ITGAL/LFA-1, resulting in an enhanced adhesion to ICAM1. Together with RAP1A may participate in regulation of microtubule growth. The association of isoform 2 with activated RAP1A is required for directional movement of endothelial cells during wound healing. May be involved in regulation of Ras apoptotic function. The RASSF5-STK4/MST1 complex may mediate HRAS and KRAS induced apoptosis. The sequence is that of Ras association domain-containing protein 5 (RASSF5) from Homo sapiens (Human).